The following is a 200-amino-acid chain: Male-specific histamine-binding salivary protein (200 aa).

A signal peptide spans 1–18; that stretch reads MKVLLLVLGAALCQNADA. 4 residues coordinate histamine: serine 37, aspartate 41, aspartate 56, and tryptophan 59. Disulfide bonds link cysteine 65–cysteine 193 and cysteine 137–cysteine 169. Asparagine 79 is a glycosylation site (N-linked (GlcNAc...) asparagine). Histamine is bound by residues glutamate 97, tyrosine 115, phenylalanine 125, aspartate 138, glutamate 154, and tryptophan 156.

Belongs to the calycin superfamily. Histamine-binding salivary protein family. Homodimer; disulcde-linked. Post-translationally, N-glycosylated. As to expression, expressed in salivary glands.

It localises to the secreted. Functionally, salivary tick protein that acts by scavenging histamine at the wound site, outcompeting histamine receptors for histamine, thereby overcoming host inflammatory responses. Binds histamine with a high-affinity (Kd=1.2 nM). Contains two binding histamine sites (H and L), that appear to bind histamine with differing affinities. The chain is Male-specific histamine-binding salivary protein from Rhipicephalus appendiculatus (Brown ear tick).